The following is a 150-amino-acid chain: Small ribosomal subunit protein uS7c (150 aa).

It belongs to the universal ribosomal protein uS7 family. In terms of assembly, part of the 30S ribosomal subunit.

It localises to the plastid. The protein localises to the chloroplast. One of the primary rRNA binding proteins, it binds directly to 16S rRNA where it nucleates assembly of the head domain of the 30S subunit. This chain is Small ribosomal subunit protein uS7c (rps7), found in Huperzia lucidula (Shining clubmoss).